Consider the following 201-residue polypeptide: Fas apoptotic inhibitory molecule 1 (201 aa).

The protein belongs to the FAIM1 family.

Its subcellular location is the cytoplasm. In terms of biological role, plays a role as an inducible effector molecule that mediates Fas resistance produced by surface Ig engagement in B cells. The protein is Fas apoptotic inhibitory molecule 1 (Faim) of Rattus norvegicus (Rat).